The sequence spans 221 residues: IPSINILSFLLLSSTLSLVAFARSFTSENPIVLPTTCHDDDNLVLPEVYDQDGNPLRIGERYIIKNPLLGAGAVYLDNIGNLQCPNAVLQHMSIPQFLGKGTPVVFIRKSESDYGDVVRLMTAVYIKFFVKTTKLCVDETVWKVNNEQLVVTGGNVGNENDIFKIKKTDLVIRGMKNVYKLLHCPSHLECKNIGSTFKNGYPRLVTVNDEKDFIPFVFIKA.

An N-terminal signal peptide occupies residues 1–26; the sequence is IPSINILSFLLLSSTLSLVAFARSFT. A propeptide spanning residues 27–42 is cleaved from the precursor; that stretch reads SENPIVLPTTCHDDDN. Residues 29–34 carry the Vacuolar targeting signal motif; that stretch reads NPIVLP. Disulfide bonds link Cys84-Cys136 and Cys184-Cys190.

Belongs to the protease inhibitor I3 (leguminous Kunitz-type inhibitor) family.

It localises to the vacuole. Functionally, inhibitor of cysteine proteases. May protect the plant by inhibiting proteases of invading organisms. The protein is Cysteine protease inhibitor 8 of Solanum tuberosum (Potato).